The sequence spans 1181 residues: Lysine-specific demethylase hairless (1181 aa).

A compositionally biased stretch (pro residues) spans 311–323; that stretch reads TPRCPSPGPPTPP. 3 disordered regions span residues 311 to 378, 413 to 472, and 509 to 543; these read TPRC…HTKL, AGSP…DGRI, and SHSQKSHKLPLEEKPLEEDSCATSEEGGGSSPEAS. Residues 347–357 show a composition bias toward low complexity; it reads SPEGSSSGPGE. Polar residues predominate over residues 447–461; that stretch reads TPETSTGSKAEAQQQ. Residues 462–472 are compositionally biased toward basic and acidic residues; that stretch reads EEQRGPRDGRI. Residues 560–564 carry the LXXLL motif 1 motif; sequence LCRLL. The segment at 594-619 adopts a C6-type zinc-finger fold; sequence CSRCHHGLFNTHWRCSHCSHRLCVAC. Residues 696-745 are disordered; that stretch reads GDGGQQKEPTEKTPPAPQLSCNGDSNRTKDIKEETPDSTESPAEDRAGRS. A compositionally biased stretch (basic and acidic residues) spans 721 to 730; that stretch reads NRTKDIKEET. Residues 752 to 756 carry the LXXLL motif 2 motif; the sequence is LCELL. In terms of domain architecture, JmjC spans 938–1149; sequence DESRVENLAS…LSAQLCHQGA (212 aa). Residues cysteine 999, glutamate 1001, and histidine 1117 each contribute to the Fe cation site.

Fe(2+) is required as a cofactor.

The protein resides in the nucleus. It carries out the reaction N(6),N(6)-dimethyl-L-lysyl(9)-[histone H3] + 2 2-oxoglutarate + 2 O2 = L-lysyl(9)-[histone H3] + 2 formaldehyde + 2 succinate + 2 CO2. In terms of biological role, histone demethylase that specifically demethylates both mono- and dimethylated 'Lys-9' of histone H3. May act as a transcription regulator controlling hair biology (via targeting of collagens), neural activity, and cell cycle. The polypeptide is Lysine-specific demethylase hairless (Hr) (Rattus norvegicus (Rat)).